The following is a 339-amino-acid chain: Small ribosomal subunit protein uS3m (339 aa).

Belongs to the universal ribosomal protein uS3 family.

Its subcellular location is the mitochondrion. Functionally, essential for mitochondrial protein synthesis and required for the maturation of small ribosomal subunits. In Candida glabrata (strain ATCC 2001 / BCRC 20586 / JCM 3761 / NBRC 0622 / NRRL Y-65 / CBS 138) (Yeast), this protein is Small ribosomal subunit protein uS3m (VAR1).